The chain runs to 664 residues: uncharacterized protein (664 aa).

Positions 1–25 (MSWKRYLKWVSFAIIPLLFANTSIK) are cleaved as a signal peptide. The helical transmembrane segment at 625 to 645 (IIVYLIIGFSVLVLFITVFIY) threads the bilayer.

Belongs to the MG414/MG415 family.

The protein localises to the cell membrane. This is an uncharacterized protein from Mycoplasma genitalium (strain ATCC 33530 / DSM 19775 / NCTC 10195 / G37) (Mycoplasmoides genitalium).